The sequence spans 86 residues: Small ribosomal subunit protein bS20 (86 aa).

This sequence belongs to the bacterial ribosomal protein bS20 family.

Functionally, binds directly to 16S ribosomal RNA. The sequence is that of Small ribosomal subunit protein bS20 from Sulfurimonas denitrificans (strain ATCC 33889 / DSM 1251) (Thiomicrospira denitrificans (strain ATCC 33889 / DSM 1251)).